Consider the following 471-residue polypeptide: Adenosylhomocysteinase (471 aa).

Substrate-binding residues include threonine 60, aspartate 135, and glutamate 196. 197–199 lines the NAD(+) pocket; that stretch reads TTT. 2 residues coordinate substrate: lysine 226 and aspartate 230. Residues asparagine 231, 260-265, glutamate 283, asparagine 318, 339-341, and asparagine 387 contribute to the NAD(+) site; these read GYGDVG and IGH.

The protein belongs to the adenosylhomocysteinase family. NAD(+) is required as a cofactor.

Its subcellular location is the cytoplasm. The enzyme catalyses S-adenosyl-L-homocysteine + H2O = L-homocysteine + adenosine. Its pathway is amino-acid biosynthesis; L-homocysteine biosynthesis; L-homocysteine from S-adenosyl-L-homocysteine: step 1/1. Its function is as follows. May play a key role in the regulation of the intracellular concentration of adenosylhomocysteine. The polypeptide is Adenosylhomocysteinase (Chlorobium phaeobacteroides (strain DSM 266 / SMG 266 / 2430)).